Reading from the N-terminus, the 424-residue chain is S-adenosylmethionine synthase (424 aa).

His-14 contacts ATP. Asp-16 provides a ligand contact to Mg(2+). Residue Glu-42 coordinates K(+). L-methionine-binding residues include Glu-55 and Gln-98. The tract at residues 98-108 is flexible loop; it reads QSNDISRGIER. Residues 165 to 167, 242 to 243, Asp-251, 257 to 258, Ala-274, and Lys-278 each bind ATP; these read DAK, KF, and RK. Residue Asp-251 coordinates L-methionine. Lys-282 is a binding site for L-methionine.

Belongs to the AdoMet synthase family. As to quaternary structure, homotetramer; dimer of dimers. Mg(2+) serves as cofactor. It depends on K(+) as a cofactor.

The protein resides in the cytoplasm. It catalyses the reaction L-methionine + ATP + H2O = S-adenosyl-L-methionine + phosphate + diphosphate. It functions in the pathway amino-acid biosynthesis; S-adenosyl-L-methionine biosynthesis; S-adenosyl-L-methionine from L-methionine: step 1/1. In terms of biological role, catalyzes the formation of S-adenosylmethionine (AdoMet) from methionine and ATP. The overall synthetic reaction is composed of two sequential steps, AdoMet formation and the subsequent tripolyphosphate hydrolysis which occurs prior to release of AdoMet from the enzyme. The sequence is that of S-adenosylmethionine synthase from Azobacteroides pseudotrichonymphae genomovar. CFP2.